The sequence spans 120 residues: MKQANRLTKREEYSQVLARGGTYIGPLAIMKTLPNNLELSRVGFIVSKKVGGAVERNRAKRILRESLRTTGLKQGWDIVFIARAKAATVKCAEMERVVKHLLGKAQILSKTDEKTSFKTD.

This sequence belongs to the RnpA family. As to quaternary structure, consists of a catalytic RNA component (M1 or rnpB) and a protein subunit.

The enzyme catalyses Endonucleolytic cleavage of RNA, removing 5'-extranucleotides from tRNA precursor.. Functionally, RNaseP catalyzes the removal of the 5'-leader sequence from pre-tRNA to produce the mature 5'-terminus. It can also cleave other RNA substrates such as 4.5S RNA. The protein component plays an auxiliary but essential role in vivo by binding to the 5'-leader sequence and broadening the substrate specificity of the ribozyme. This chain is Ribonuclease P protein component, found in Dehalococcoides mccartyi (strain CBDB1).